The primary structure comprises 198 residues: MKVTKAEIVISAVRPDQYPGGDLPEIALAGRSNVGKSSFINTILNRKKLVRISSKPGKTQTLNFFIINDMMHFVDVPGYGYAKVSKSERAAWGKMIETYFTTREQLDATVLVIDLRHPPTKDDVMMYDFLKHYEIPTIIIATKADKIPKGKWQKHLKVVKETLDVEAGDEVVLFSSETGLGKEEAWKAIHKFTKTKNA.

Positions D22–T195 constitute an EngB-type G domain. Residues G30 to S37, G57 to T61, D75 to G78, T142 to D145, and F174 to S176 contribute to the GTP site. Mg(2+) is bound by residues S37 and T59.

It belongs to the TRAFAC class TrmE-Era-EngA-EngB-Septin-like GTPase superfamily. EngB GTPase family. The cofactor is Mg(2+).

Functionally, necessary for normal cell division and for the maintenance of normal septation. In Bacillus cytotoxicus (strain DSM 22905 / CIP 110041 / 391-98 / NVH 391-98), this protein is Probable GTP-binding protein EngB.